The following is a 903-amino-acid chain: Translation initiation factor IF-2 (903 aa).

Residues 49–314 are disordered; that stretch reads LNREHGSGPD…GSSLQQGFNK (266 aa). The span at 68–82 shows a compositional bias: polar residues; it reads STLNIQGTGGKSKSV. Composition is skewed to basic and acidic residues over residues 93–163 and 174–225; these read VKRD…EAAE and EVSK…ENAT. Over residues 265–279 the composition is skewed to basic residues; it reads GRARPAKVARQKKSN. Over residues 280 to 293 the composition is skewed to basic and acidic residues; sequence KHSESKADREEARA. One can recognise a tr-type G domain in the interval 402 to 571; it reads PRAPVVTIMG…LLQSEVLELK (170 aa). The tract at residues 411 to 418 is G1; sequence GHVDHGKT. 411-418 lines the GTP pocket; sequence GHVDHGKT. A G2 region spans residues 436–440; it reads GITQH. Positions 457–460 are G3; the sequence is DTPG. GTP-binding positions include 457-461 and 511-514; these read DTPGH and NKID. The G4 stretch occupies residues 511–514; it reads NKID. A G5 region spans residues 547 to 549; sequence SAK.

Belongs to the TRAFAC class translation factor GTPase superfamily. Classic translation factor GTPase family. IF-2 subfamily.

The protein localises to the cytoplasm. In terms of biological role, one of the essential components for the initiation of protein synthesis. Protects formylmethionyl-tRNA from spontaneous hydrolysis and promotes its binding to the 30S ribosomal subunits. Also involved in the hydrolysis of GTP during the formation of the 70S ribosomal complex. The polypeptide is Translation initiation factor IF-2 (Cronobacter sakazakii (strain ATCC BAA-894) (Enterobacter sakazakii)).